Here is a 90-residue protein sequence, read N- to C-terminus: Small ribosomal subunit protein bS18A (90 aa).

This sequence belongs to the bacterial ribosomal protein bS18 family. As to quaternary structure, part of the 30S ribosomal subunit. Forms a tight heterodimer with protein bS6.

Binds as a heterodimer with protein bS6 to the central domain of the 16S rRNA, where it helps stabilize the platform of the 30S subunit. The polypeptide is Small ribosomal subunit protein bS18A (Roseiflexus castenholzii (strain DSM 13941 / HLO8)).